A 446-amino-acid chain; its full sequence is N-succinylarginine dihydrolase (446 aa).

Residues 19-28 (SGLSYGNVAS), Asn110, and 137-138 (HR) contribute to the substrate site. The active site involves Glu174. Arg214 contributes to the substrate binding site. His250 is a catalytic residue. The substrate site is built by Asp252 and Asn363. Cys369 (nucleophile) is an active-site residue.

Belongs to the succinylarginine dihydrolase family. In terms of assembly, homodimer.

The enzyme catalyses N(2)-succinyl-L-arginine + 2 H2O + 2 H(+) = N(2)-succinyl-L-ornithine + 2 NH4(+) + CO2. Its pathway is amino-acid degradation; L-arginine degradation via AST pathway; L-glutamate and succinate from L-arginine: step 2/5. Catalyzes the hydrolysis of N(2)-succinylarginine into N(2)-succinylornithine, ammonia and CO(2). The sequence is that of N-succinylarginine dihydrolase from Hahella chejuensis (strain KCTC 2396).